The chain runs to 494 residues: Probable cytosol aminopeptidase (494 aa).

Mn(2+)-binding residues include K260 and D265. K272 is an active-site residue. 3 residues coordinate Mn(2+): D283, D342, and E344. The active site involves R346.

The protein belongs to the peptidase M17 family. Requires Mn(2+) as cofactor.

It is found in the cytoplasm. It carries out the reaction Release of an N-terminal amino acid, Xaa-|-Yaa-, in which Xaa is preferably Leu, but may be other amino acids including Pro although not Arg or Lys, and Yaa may be Pro. Amino acid amides and methyl esters are also readily hydrolyzed, but rates on arylamides are exceedingly low.. The catalysed reaction is Release of an N-terminal amino acid, preferentially leucine, but not glutamic or aspartic acids.. Functionally, presumably involved in the processing and regular turnover of intracellular proteins. Catalyzes the removal of unsubstituted N-terminal amino acids from various peptides. The chain is Probable cytosol aminopeptidase from Bacillus cereus (strain ATCC 14579 / DSM 31 / CCUG 7414 / JCM 2152 / NBRC 15305 / NCIMB 9373 / NCTC 2599 / NRRL B-3711).